We begin with the raw amino-acid sequence, 363 residues long: Chorismate synthase (363 aa).

NADP(+)-binding residues include Arg-48 and Arg-54. FMN contacts are provided by residues 131–133 (RSS), 244–245 (NA), Gly-288, 303–307 (KPTSS), and Arg-329.

The protein belongs to the chorismate synthase family. As to quaternary structure, homotetramer. FMNH2 serves as cofactor.

It catalyses the reaction 5-O-(1-carboxyvinyl)-3-phosphoshikimate = chorismate + phosphate. It participates in metabolic intermediate biosynthesis; chorismate biosynthesis; chorismate from D-erythrose 4-phosphate and phosphoenolpyruvate: step 7/7. Functionally, catalyzes the anti-1,4-elimination of the C-3 phosphate and the C-6 proR hydrogen from 5-enolpyruvylshikimate-3-phosphate (EPSP) to yield chorismate, which is the branch point compound that serves as the starting substrate for the three terminal pathways of aromatic amino acid biosynthesis. This reaction introduces a second double bond into the aromatic ring system. The chain is Chorismate synthase from Hyphomonas neptunium (strain ATCC 15444).